A 456-amino-acid chain; its full sequence is Bifunctional protein GlmU (456 aa).

Positions 1 to 229 (MLNSAMSVVI…ISETDGVNNR (229 aa)) are pyrophosphorylase. UDP-N-acetyl-alpha-D-glucosamine-binding positions include 11-14 (LAAG), Lys25, Gln76, 81-82 (GT), 103-105 (YGD), Gly140, Glu154, Asn169, and Asn227. Mg(2+) is bound at residue Asp105. Residue Asn227 coordinates Mg(2+). The tract at residues 230 to 250 (LQLSRLERIYQAEQAEKLLLS) is linker. The tract at residues 251–456 (GVMLRDPARF…QGWQRPVKKK (206 aa)) is N-acetyltransferase. Residues Arg333 and Lys351 each coordinate UDP-N-acetyl-alpha-D-glucosamine. Residue His363 is the Proton acceptor of the active site. UDP-N-acetyl-alpha-D-glucosamine-binding residues include Tyr366 and Asn377. Acetyl-CoA is bound by residues Ala380, 386–387 (NY), Ser405, Ala423, and Arg440.

It in the N-terminal section; belongs to the N-acetylglucosamine-1-phosphate uridyltransferase family. The protein in the C-terminal section; belongs to the transferase hexapeptide repeat family. Homotrimer. It depends on Mg(2+) as a cofactor.

The protein localises to the cytoplasm. The enzyme catalyses alpha-D-glucosamine 1-phosphate + acetyl-CoA = N-acetyl-alpha-D-glucosamine 1-phosphate + CoA + H(+). It carries out the reaction N-acetyl-alpha-D-glucosamine 1-phosphate + UTP + H(+) = UDP-N-acetyl-alpha-D-glucosamine + diphosphate. The protein operates within nucleotide-sugar biosynthesis; UDP-N-acetyl-alpha-D-glucosamine biosynthesis; N-acetyl-alpha-D-glucosamine 1-phosphate from alpha-D-glucosamine 6-phosphate (route II): step 2/2. It participates in nucleotide-sugar biosynthesis; UDP-N-acetyl-alpha-D-glucosamine biosynthesis; UDP-N-acetyl-alpha-D-glucosamine from N-acetyl-alpha-D-glucosamine 1-phosphate: step 1/1. It functions in the pathway bacterial outer membrane biogenesis; LPS lipid A biosynthesis. Catalyzes the last two sequential reactions in the de novo biosynthetic pathway for UDP-N-acetylglucosamine (UDP-GlcNAc). The C-terminal domain catalyzes the transfer of acetyl group from acetyl coenzyme A to glucosamine-1-phosphate (GlcN-1-P) to produce N-acetylglucosamine-1-phosphate (GlcNAc-1-P), which is converted into UDP-GlcNAc by the transfer of uridine 5-monophosphate (from uridine 5-triphosphate), a reaction catalyzed by the N-terminal domain. In Salmonella paratyphi A (strain ATCC 9150 / SARB42), this protein is Bifunctional protein GlmU.